The sequence spans 239 residues: Putative transcriptional regulator of 2-aminoethylphosphonate degradation operons (239 aa).

The 69-residue stretch at 8–76 (IPQYLLIKAQ…DRRGWFVTPE (69 aa)) folds into the HTH gntR-type domain. The segment at residues 36–55 (ERELCAIFNTTRITIRESLA) is a DNA-binding region (H-T-H motif).

The chain is Putative transcriptional regulator of 2-aminoethylphosphonate degradation operons (phnR) from Salmonella paratyphi A (strain ATCC 9150 / SARB42).